Reading from the N-terminus, the 778-residue chain is Endonuclease MutS2 (778 aa).

G328–T335 lines the ATP pocket. The region spanning L702–K777 is the Smr domain.

Belongs to the DNA mismatch repair MutS family. MutS2 subfamily. Homodimer. Binds to stalled ribosomes, contacting rRNA.

Functionally, endonuclease that is involved in the suppression of homologous recombination and thus may have a key role in the control of bacterial genetic diversity. Acts as a ribosome collision sensor, splitting the ribosome into its 2 subunits. Detects stalled/collided 70S ribosomes which it binds and splits by an ATP-hydrolysis driven conformational change. Acts upstream of the ribosome quality control system (RQC), a ribosome-associated complex that mediates the extraction of incompletely synthesized nascent chains from stalled ribosomes and their subsequent degradation. Probably generates substrates for RQC. This chain is Endonuclease MutS2, found in Streptococcus pneumoniae (strain CGSP14).